A 95-amino-acid polypeptide reads, in one-letter code: Protein TusB (95 aa).

It belongs to the DsrH/TusB family. Heterohexamer, formed by a dimer of trimers. The hexameric TusBCD complex contains 2 copies each of TusB, TusC and TusD. The TusBCD complex interacts with TusE.

Its subcellular location is the cytoplasm. In terms of biological role, part of a sulfur-relay system required for 2-thiolation of 5-methylaminomethyl-2-thiouridine (mnm(5)s(2)U) at tRNA wobble positions. This is Protein TusB from Escherichia coli O139:H28 (strain E24377A / ETEC).